Consider the following 200-residue polypeptide: Membrane-spanning 4-domains subfamily A member 5 (200 aa).

Over 1 to 52 the chain is Cytoplasmic; sequence MDSSTAHSPVFLVFPPEITASEYESTELSATTFSTQSPLQKLFARKMKILGT. The helical transmembrane segment at 53 to 73 threads the bilayer; sequence IQILFGIMTFSFGVIFLFTLL. Over 74-80 the chain is Extracellular; sequence KPYPRFP. A helical membrane pass occupies residues 81-101; it reads FIFLSGYPFWGSVLFINSGAF. Residues 102 to 120 lie on the Cytoplasmic side of the membrane; that stretch reads LIAVKRKTTETLIILSRIM. A helical transmembrane segment spans residues 121–141; that stretch reads NFLSALGAIAGIILLTFGFIL. Residues 142–159 are Extracellular-facing; the sequence is DQNYICGYSHQNSQCKAV. Residues 160–180 traverse the membrane as a helical segment; the sequence is TVLFLGILITLMTFSIIELFI. The Cytoplasmic portion of the chain corresponds to 181 to 200; it reads SLPFSILGCHSEDCDCEQCC.

Belongs to the MS4A family. In terms of tissue distribution, expressed at high level in the testis. Detected also in the pancreas, heart and in the brain.

The protein localises to the membrane. May be involved in signal transduction as a component of a multimeric receptor complex. The polypeptide is Membrane-spanning 4-domains subfamily A member 5 (MS4A5) (Homo sapiens (Human)).